The primary structure comprises 600 residues: ATP-dependent RNA helicase DDX55 (600 aa).

The short motif at 9-37 is the Q motif element; that stretch reads WESLQVPLHPRVLGALRELGFPHMTPVQS. The Helicase ATP-binding domain maps to 40 to 223; it reads IPLFMKNKDV…RAGLRNPVRI (184 aa). 53–60 contacts ATP; that stretch reads AVTGSGKT. Residues 171 to 174 carry the DEAD box motif; sequence DEAD. The 149-residue stretch at 254-402 folds into the Helicase C-terminal domain; it reads KFNQLVHFLR…EMSLQRNTID (149 aa). Over residues 499–513 the composition is skewed to basic and acidic residues; the sequence is LEQKRKERSENEGRK. Positions 499–551 are disordered; sequence LEQKRKERSENEGRKKFIKNKAWSKQKAKKERKKKMNAKRKKDEGSDIDDEDM. A compositionally biased stretch (basic residues) spans 514–538; sequence KFIKNKAWSKQKAKKERKKKMNAKR. Residues 533–562 are important for nuclear localization; that stretch reads KMNAKRKKDEGSDIDDEDMEELLNDTRLLK. A phosphoserine mark is found at Ser544 and Ser594.

This sequence belongs to the DEAD box helicase family. DDX55/SPB4 subfamily. As to quaternary structure, interacts with 28S rRNA. Interacts with double-stranded RNA substrates in vitro; the interaction stimulates ATPase activity.

The protein localises to the nucleus. Its subcellular location is the nucleoplasm. It catalyses the reaction ATP + H2O = ADP + phosphate + H(+). Probable ATP-binding RNA helicase. Has ATPase activity and is involved in the maturation of precursor large subunit rRNAs. The protein is ATP-dependent RNA helicase DDX55 (Ddx55) of Mus musculus (Mouse).